Here is a 270-residue protein sequence, read N- to C-terminus: Mediator of RNA polymerase II transcription subunit 4 (270 aa).

Residues 1–22 (MAASSSGEKEKERLGGGLGVAG) are disordered. The residue at position 2 (Ala-2) is an N-acetylalanine. Coiled coils occupy residues 24–48 (NSTRERLLSALEDLEVLSRELIEML) and 90–131 (HHEM…AKEK). Ser-32 is subject to Phosphoserine. The interval 226 to 270 (DMSMNMLPPNHSSDFLLEPPGHNKENEDDVEIMSTDSSSSSSESD) is disordered. Positions 259-270 (STDSSSSSSESD) are enriched in low complexity.

The protein belongs to the Mediator complex subunit 4 family. Component of the Mediator complex, which is composed of MED1, MED4, MED6, MED7, MED8, MED9, MED10, MED11, MED12, MED13, MED13L, MED14, MED15, MED16, MED17, MED18, MED19, MED20, MED21, MED22, MED23, MED24, MED25, MED26, MED27, MED29, MED30, MED31, CCNC, CDK8 and CDC2L6/CDK11. The MED12, MED13, CCNC and CDK8 subunits form a distinct module termed the CDK8 module. Mediator containing the CDK8 module is less active than Mediator lacking this module in supporting transcriptional activation. Individual preparations of the Mediator complex lacking one or more distinct subunits have been variously termed ARC, CRSP, DRIP, PC2, SMCC and TRAP.

It is found in the nucleus. Functionally, component of the Mediator complex, a coactivator involved in the regulated transcription of nearly all RNA polymerase II-dependent genes. Mediator functions as a bridge to convey information from gene-specific regulatory proteins to the basal RNA polymerase II transcription machinery. Mediator is recruited to promoters by direct interactions with regulatory proteins and serves as a scaffold for the assembly of a functional preinitiation complex with RNA polymerase II and the general transcription factors. This is Mediator of RNA polymerase II transcription subunit 4 (MED4) from Homo sapiens (Human).